Reading from the N-terminus, the 285-residue chain is MAHQAHPFRSVLYIPGSKERALEKAQGLAADAIIFDLEDAVAHDEKIHARDLLRKTLETADYGRRIRIVRVNGMDTEWGRDDVAAFAGSKADVILIPKVSSATDVQAVADLIPDVPLWAMMETALGMLNAAEIAAHPRLTGMVMGTNDLAKELTSRFRPDRLALQTGLGLCLLAARAHGLTIVDGVYNAFKDEDGLRAECEHGRDMGFDGKTLIHPAQLEIANEVFSPSSAEIELANRQIAAFEEAERHGQGVAVVDGKIVENLHIVTARQTLAKAEAIAAFGAS.

R70 and E122 together coordinate substrate. 2 residues coordinate Mg(2+): E122 and D148.

Belongs to the HpcH/HpaI aldolase family. As to quaternary structure, homodimer or homotrimer. Mg(2+) is required as a cofactor.

It catalyses the reaction (S)-malyl-CoA + H2O = (S)-malate + CoA + H(+). Functionally, catalyzes the hydrolysis of (3S)-malyl-CoA to (3S)-malate and free CoA. Inactive towards beta-methylmalyl-CoA and other CoA esters. The protein is (3S)-malyl-CoA thioesterase of Cereibacter sphaeroides (strain ATCC 17025 / ATH 2.4.3) (Rhodobacter sphaeroides).